The following is a 253-amino-acid chain: Imidazole glycerol phosphate synthase subunit HisF (253 aa).

Residues aspartate 11 and aspartate 130 contribute to the active site.

The protein belongs to the HisA/HisF family. In terms of assembly, heterodimer of HisH and HisF.

It localises to the cytoplasm. It catalyses the reaction 5-[(5-phospho-1-deoxy-D-ribulos-1-ylimino)methylamino]-1-(5-phospho-beta-D-ribosyl)imidazole-4-carboxamide + L-glutamine = D-erythro-1-(imidazol-4-yl)glycerol 3-phosphate + 5-amino-1-(5-phospho-beta-D-ribosyl)imidazole-4-carboxamide + L-glutamate + H(+). It functions in the pathway amino-acid biosynthesis; L-histidine biosynthesis; L-histidine from 5-phospho-alpha-D-ribose 1-diphosphate: step 5/9. Functionally, IGPS catalyzes the conversion of PRFAR and glutamine to IGP, AICAR and glutamate. The HisF subunit catalyzes the cyclization activity that produces IGP and AICAR from PRFAR using the ammonia provided by the HisH subunit. The sequence is that of Imidazole glycerol phosphate synthase subunit HisF from Myxococcus xanthus (strain DK1622).